The sequence spans 239 residues: Ribosomal RNA large subunit methyltransferase E (239 aa).

The tract at residues 1-20 is disordered; it reads MTKAPIAGNRTGRKLGQRVK. Positions 11–20 are enriched in basic residues; sequence TGRKLGQRVK. The S-adenosyl-L-methionine site is built by Gly-81, Trp-83, Asp-104, Asp-120, and Asp-144. Catalysis depends on Lys-184, which acts as the Proton acceptor.

Belongs to the class I-like SAM-binding methyltransferase superfamily. RNA methyltransferase RlmE family.

It is found in the cytoplasm. The enzyme catalyses uridine(2552) in 23S rRNA + S-adenosyl-L-methionine = 2'-O-methyluridine(2552) in 23S rRNA + S-adenosyl-L-homocysteine + H(+). Functionally, specifically methylates the uridine in position 2552 of 23S rRNA at the 2'-O position of the ribose in the fully assembled 50S ribosomal subunit. This is Ribosomal RNA large subunit methyltransferase E from Rhizobium etli (strain ATCC 51251 / DSM 11541 / JCM 21823 / NBRC 15573 / CFN 42).